Here is a 429-residue protein sequence, read N- to C-terminus: Transcription factor IIIA (429 aa).

The tract at residues 1–45 is disordered; the sequence is MGGEVLNNEGMPLAELKQETIPISRSESSESLNSLTSTRSSSSNR. The span at 24 to 44 shows a compositional bias: low complexity; that stretch reads SRSESSESLNSLTSTRSSSSN. 9 consecutive C2H2-type zinc fingers follow at residues 49-74, 80-102, 108-130, 134-159, 163-186, 194-219, 222-244, 253-277, and 365-389; these read YFCD…LSVH, FQCD…LYTH, FQCS…EVTH, FICP…LSVH, LTCP…SKHH, YQCT…KNDH, LKCP…MIIH, WKCH…GSIH, and YRCF…IDKH. Over residues 406–416 the composition is skewed to basic and acidic residues; it reads KTLVDQNHKEP. The disordered stretch occupies residues 406-429; that stretch reads KTLVDQNHKEPFIIQKETQSAGDK.

Its subcellular location is the nucleus. Its function is as follows. Interacts with the internal control region (ICR) of approximately 50 bases within the 5S RNA genes, is required for correct transcription of these genes by RNA polymerase III. Also binds the transcribed 5S RNA's. This chain is Transcription factor IIIA (PZF1), found in Saccharomyces cerevisiae (strain ATCC 204508 / S288c) (Baker's yeast).